Reading from the N-terminus, the 231-residue chain is Large ribosomal subunit protein uL1 (231 aa).

Belongs to the universal ribosomal protein uL1 family. As to quaternary structure, part of the 50S ribosomal subunit.

In terms of biological role, binds directly to 23S rRNA. The L1 stalk is quite mobile in the ribosome, and is involved in E site tRNA release. Functionally, protein L1 is also a translational repressor protein, it controls the translation of the L11 operon by binding to its mRNA. This chain is Large ribosomal subunit protein uL1, found in Dechloromonas aromatica (strain RCB).